The primary structure comprises 206 residues: Cytochrome c (206 aa).

3 helical membrane passes run 10–30 (IALA…VSFL), 49–69 (FMGW…LGKM), and 76–96 (KWFL…FLSL). Heme-binding residues include C152, C155, H156, and M182.

As to quaternary structure, monomer. Component of the photosynthetic reaction center composed of protein subunits PscA, PscC, PscB and PscD. The reaction center interacts with FmoA (which forms the Fenna-Matthews-Olson (FMO) complex). The reaction center/FmoA complex has two PscA subunits, one PscB and one PscD subunit, probably two FmoA complexes and at least one PscC subunit. In terms of processing, binds 1 heme group per subunit.

The protein resides in the cell inner membrane. Monoheme cytochrome which is the immediate electron donor to P840 of the photosynthetic reaction center complex. This is Cytochrome c (pscC) from Chlorobaculum tepidum (strain ATCC 49652 / DSM 12025 / NBRC 103806 / TLS) (Chlorobium tepidum).